The primary structure comprises 199 residues: Recombination protein RecR (199 aa).

Residues 57–72 (CQSCRTFTEQDLCPIC) form a C4-type zinc finger. Residues 81–176 (GIICVVETPA…VISRIAHGVP (96 aa)) enclose the Toprim domain.

The protein belongs to the RecR family.

Its function is as follows. May play a role in DNA repair. It seems to be involved in an RecBC-independent recombinational process of DNA repair. It may act with RecF and RecO. This is Recombination protein RecR from Shewanella frigidimarina (strain NCIMB 400).